The chain runs to 88 residues: Small ribosomal subunit protein bS18A (88 aa).

The protein belongs to the bacterial ribosomal protein bS18 family. In terms of assembly, part of the 30S ribosomal subunit. Forms a tight heterodimer with protein bS6.

Its function is as follows. Binds as a heterodimer with protein bS6 to the central domain of the 16S rRNA, where it helps stabilize the platform of the 30S subunit. This Mycolicibacterium gilvum (strain PYR-GCK) (Mycobacterium gilvum (strain PYR-GCK)) protein is Small ribosomal subunit protein bS18A.